Reading from the N-terminus, the 166-residue chain is Prorelaxin H2 (166 aa).

The N-terminal stretch at Ser1–Ala5 is a signal peptide. Disulfide bonds link Cys16/Cys153, Cys28/Cys166, and Cys152/Cys157. Residues Ser37 to Ser138 constitute a propeptide, connecting peptide.

Belongs to the insulin family. Heterodimer of a B chain and an A chain linked by two disulfide bonds. As to expression, expressed in the corpus luteum of pregnancy and in the placenta.

The protein localises to the secreted. Relaxin is an ovarian hormone that acts with estrogen to produce dilatation of the birth canal in many mammals. May be involved in remodeling of connective tissues during pregnancy, promoting growth of pubic ligaments and ripening of the cervix. The chain is Prorelaxin H2 (RNL2) from Pan troglodytes (Chimpanzee).